The chain runs to 391 residues: Cytochrome b (391 aa).

4 consecutive transmembrane segments (helical) span residues 33-53 (FGSL…FLAM), 77-98 (WLIR…YLHI), 113-133 (WSAG…GYVL), and 178-198 (FFAF…VHLL). Heme b is bound by residues His-83 and His-97. Residues His-182 and His-196 each contribute to the heme b site. His-201 lines the a ubiquinone pocket. Helical transmembrane passes span 226–246 (YKDL…VLFI), 288–308 (LGGV…PILH), 320–340 (LAQI…WIGG), and 347–367 (FIII…VFFP).

Belongs to the cytochrome b family. As to quaternary structure, the cytochrome bc1 complex contains 3 respiratory subunits (MT-CYB, CYC1 and UQCRFS1), 2 core proteins (UQCRC1 and UQCRC2) and probably 6 low-molecular weight proteins. Heme b serves as cofactor.

The protein localises to the mitochondrion inner membrane. Component of the ubiquinol-cytochrome c reductase complex (complex III or cytochrome b-c1 complex) that is part of the mitochondrial respiratory chain. The b-c1 complex mediates electron transfer from ubiquinol to cytochrome c. Contributes to the generation of a proton gradient across the mitochondrial membrane that is then used for ATP synthesis. In Kryptolebias marmoratus (Mangrove killifish), this protein is Cytochrome b (mt-cyb).